The following is a 181-amino-acid chain: Cytochrome P450 monooxygenase dtpC (181 aa).

C125 lines the heme pocket.

It belongs to the cytochrome P450 family. Heme serves as cofactor.

It participates in alkaloid biosynthesis. The protein operates within secondary metabolite biosynthesis. In terms of biological role, cytochrome P450 monooxygenase; part of the gene cluster that mediates the biosynthesis of the dimeric diketopiperazine alkaloid ditryptophenaline. The nonribosomal peptide synthase dtpA accepts L-tryptophan and L-phenylalanine as its substrates and forms the phenylalanyl-tryptophanyl cyclic dipeptide product cyclophenylalanyltryptophenyl. The N-methyltransferase dtpB is responsible for the N-methylation of cyclophenylalanyltryptophenyl to yield cyclo-N-methylphenylalanyltryptophenyl. The cytochrome P450 monooxygenase is responsible not only for pyrroloindole ring formation but also for concurrent dimerization of N-methylphenylalanyltryptophanyl diketopiperazine monomers into a homodimeric product. In Aspergillus flavus (strain ATCC 200026 / FGSC A1120 / IAM 13836 / NRRL 3357 / JCM 12722 / SRRC 167), this protein is Cytochrome P450 monooxygenase dtpC.